The following is a 591-amino-acid chain: NADP-dependent malic enzyme (591 aa).

Over residues 1–10 (MESTLKEMRD) the composition is skewed to basic and acidic residues. Residues 1–26 (MESTLKEMRDGASVLDMDPKSTVGGG) are disordered. Catalysis depends on tyrosine 139, which acts as the Proton donor. Arginine 192 is a binding site for NAD(+). Lysine 210 (proton acceptor) is an active-site residue. A divalent metal cation-binding residues include glutamate 282, aspartate 283, and aspartate 306. Residue aspartate 306 participates in NAD(+) binding. Position 335-351 (335-351 (LFLGAGEAGTGIAELIA)) interacts with NADP(+). Asparagine 447 is a binding site for NAD(+).

The protein belongs to the malic enzymes family. As to quaternary structure, homotetramer. Mg(2+) serves as cofactor. The cofactor is Mn(2+). In terms of tissue distribution, mRNA found twofold higher in leaves and stems than in roots.

It localises to the cytoplasm. It carries out the reaction (S)-malate + NADP(+) = pyruvate + CO2 + NADPH. The enzyme catalyses oxaloacetate + H(+) = pyruvate + CO2. In Populus trichocarpa (Western balsam poplar), this protein is NADP-dependent malic enzyme.